The sequence spans 138 residues: ATP synthase epsilon chain (138 aa).

This sequence belongs to the ATPase epsilon chain family. As to quaternary structure, F-type ATPases have 2 components, CF(1) - the catalytic core - and CF(0) - the membrane proton channel. CF(1) has five subunits: alpha(3), beta(3), gamma(1), delta(1), epsilon(1). CF(0) has three main subunits: a, b and c.

The protein localises to the cell membrane. Functionally, produces ATP from ADP in the presence of a proton gradient across the membrane. The chain is ATP synthase epsilon chain from Streptococcus equi subsp. zooepidemicus (strain H70).